Consider the following 372-residue polypeptide: Glutamate 5-kinase (372 aa).

K14 contacts ATP. The substrate site is built by S54, D141, and N153. 173–174 (TD) serves as a coordination point for ATP. The region spanning 280–358 (RGTLVLDDGA…EAIVRELGYM (79 aa)) is the PUA domain.

It belongs to the glutamate 5-kinase family.

The protein localises to the cytoplasm. It carries out the reaction L-glutamate + ATP = L-glutamyl 5-phosphate + ADP. It functions in the pathway amino-acid biosynthesis; L-proline biosynthesis; L-glutamate 5-semialdehyde from L-glutamate: step 1/2. Catalyzes the transfer of a phosphate group to glutamate to form L-glutamate 5-phosphate. The protein is Glutamate 5-kinase of Pseudomonas syringae pv. tomato (strain ATCC BAA-871 / DC3000).